The chain runs to 92 residues: Large ribosomal subunit protein uL23 (92 aa).

Belongs to the universal ribosomal protein uL23 family. As to quaternary structure, part of the 50S ribosomal subunit. Contacts protein L29, and trigger factor when it is bound to the ribosome.

One of the early assembly proteins it binds 23S rRNA. One of the proteins that surrounds the polypeptide exit tunnel on the outside of the ribosome. Forms the main docking site for trigger factor binding to the ribosome. In Bdellovibrio bacteriovorus (strain ATCC 15356 / DSM 50701 / NCIMB 9529 / HD100), this protein is Large ribosomal subunit protein uL23.